A 153-amino-acid chain; its full sequence is ORM1-like protein 2 (153 aa).

Topologically, residues 1 to 21 (MNVGVAHSEVNPNTRVMNSRG) are cytoplasmic. 2 consecutive transmembrane segments (helical) span residues 22–42 (IWLA…SIPF) and 43–63 (FSIP…TYVF). Over 64–105 (LHTVKGTPFETPDQGKARLLTHWEQMDYGLQFTSSRKFLSIS) the chain is Cytoplasmic. Residues 106-126 (PIVLYLLASFYTKYDAAHFLI) form a helical membrane-spanning segment. Topologically, residues 127–153 (NTASLLSVLLPKLPQFHGVRVFGINKY) are extracellular.

The protein belongs to the ORM family. As to quaternary structure, ceramide-sensitive subunit of the serine palmitoyltransferase (SPT) complex, which is also composed of SPTLC1, SPTLC2/3 and SPTSSA/B. As to expression, widely expressed. Expressed in adult and fetal heart, brain, lung, liver, skeletal muscle and kidney. Expressed in adult pancreas and placenta and in fetal spleen abd thymus.

It localises to the endoplasmic reticulum membrane. Plays an essential role in the homeostatic regulation of sphingolipid de novo biosynthesis by modulating the activity of the serine palmitoyltransferase (SPT) in response to ceramide levels. When complexed to SPT, the binding of ceramides to its N-terminus stabilizes a conformation that block SPT substrate entry, hence preventing SPT catalytic activity. Through this mechanism, maintains ceramide levels at sufficient concentrations for the production of complex sphingolipids, but which prevents the accumulation of ceramides to levels that trigger apoptosis. In Homo sapiens (Human), this protein is ORM1-like protein 2 (ORMDL2).